The following is a 47-amino-acid chain: Large ribosomal subunit protein bL33 (47 aa).

Belongs to the bacterial ribosomal protein bL33 family.

This Staphylococcus xylosus protein is Large ribosomal subunit protein bL33.